Consider the following 199-residue polypeptide: RNA-free ribonuclease P (199 aa).

The protein belongs to the HARP family.

The enzyme catalyses Endonucleolytic cleavage of RNA, removing 5'-extranucleotides from tRNA precursor.. In terms of biological role, RNA-free RNase P that catalyzes the removal of the 5'-leader sequence from pre-tRNA to produce the mature 5'-terminus. This Thermococcus onnurineus (strain NA1) protein is RNA-free ribonuclease P.